Consider the following 341-residue polypeptide: Anthranilate phosphoribosyltransferase (341 aa).

Residues Gly-81, Gly-84 to Asp-85, Ser-89, Asn-91 to Thr-94, Lys-109 to Ser-117, and Ser-121 each bind 5-phospho-alpha-D-ribose 1-diphosphate. Gly-81 contributes to the anthranilate binding site. A Mg(2+)-binding site is contributed by Ser-93. Position 112 (Asn-112) interacts with anthranilate. Arg-167 contacts anthranilate. 2 residues coordinate Mg(2+): Asp-225 and Glu-226.

The protein belongs to the anthranilate phosphoribosyltransferase family. As to quaternary structure, homodimer. It depends on Mg(2+) as a cofactor.

The catalysed reaction is N-(5-phospho-beta-D-ribosyl)anthranilate + diphosphate = 5-phospho-alpha-D-ribose 1-diphosphate + anthranilate. Its pathway is amino-acid biosynthesis; L-tryptophan biosynthesis; L-tryptophan from chorismate: step 2/5. Catalyzes the transfer of the phosphoribosyl group of 5-phosphorylribose-1-pyrophosphate (PRPP) to anthranilate to yield N-(5'-phosphoribosyl)-anthranilate (PRA). This is Anthranilate phosphoribosyltransferase from Nocardioides sp. (strain ATCC BAA-499 / JS614).